The following is a 479-amino-acid chain: Dihydrolipoyl dehydrogenase, mitochondrial (479 aa).

A mitochondrion-targeting transit peptide spans 1-19 (FNRXSPGLQGVSSVPLRTY). N6-acetyllysine; alternate is present on lysine 50. Lysine 50 is subject to N6-succinyllysine; alternate. FAD-binding positions include 55–64 (EKNETLGGTC) and lysine 73. A disulfide bridge links cysteine 64 with cysteine 69. 4 positions are modified to N6-acetyllysine; alternate: lysine 88, lysine 106, lysine 116, and lysine 127. N6-succinyllysine; alternate occurs at positions 88, 106, 116, and 127. Residue glycine 138 participates in FAD binding. Lysine 143 and lysine 150 each carry N6-succinyllysine. Position 167–169 (167–169 (TGS)) interacts with FAD. Residues 204-211 (GAGVIGVE) and glutamate 227 contribute to the NAD(+) site. N6-succinyllysine is present on residues lysine 257 and lysine 261. Residue valine 262 participates in NAD(+) binding. Serine 269 is modified (phosphoserine). Glycine 298 contributes to the NAD(+) binding site. Lysine 330 carries the N6-acetyllysine modification. Residues aspartate 339 and 345–348 (MLAH) each bind FAD. At lysine 394 the chain carries N6-acetyllysine; alternate. Lysine 394 carries the post-translational modification N6-succinyllysine; alternate. N6-acetyllysine is present on residues lysine 401 and lysine 404. Position 414 is an N6-succinyllysine (lysine 414). The Proton acceptor role is filled by histidine 471.

This sequence belongs to the class-I pyridine nucleotide-disulfide oxidoreductase family. As to quaternary structure, homodimer. Part of the multimeric pyruvate dehydrogenase complex that contains multiple copies of pyruvate dehydrogenase (subunits PDHA (PDHA1 or PDHA2) and PDHB, E1), dihydrolipoamide acetyltransferase (DLAT, E2) and lipoamide dehydrogenase (DLD, E3). These subunits are bound to an inner core composed of about 48 DLAT and 12 PDHX molecules (by non covalent bonds). The 2-oxoglutarate dehydrogenase complex is composed of OGDH (2-oxoglutarate dehydrogenase; E1), DLST (dihydrolipoamide succinyltransferase; E2) and DLD (dihydrolipoamide dehydrogenase; E3). It contains multiple copies of the three enzymatic components (E1, E2 and E3). In the nucleus, the 2-oxoglutarate dehydrogenase complex associates with KAT2A. Interacts with PDHX. Requires FAD as cofactor. Tyrosine phosphorylated. In terms of tissue distribution, expressed in testis (at protein level).

The protein resides in the mitochondrion matrix. It localises to the nucleus. The protein localises to the cell projection. Its subcellular location is the cilium. It is found in the flagellum. The protein resides in the cytoplasmic vesicle. It localises to the secretory vesicle. The protein localises to the acrosome. It carries out the reaction N(6)-[(R)-dihydrolipoyl]-L-lysyl-[protein] + NAD(+) = N(6)-[(R)-lipoyl]-L-lysyl-[protein] + NADH + H(+). Functionally, lipoamide dehydrogenase is a component of the glycine cleavage system as well as an E3 component of three alpha-ketoacid dehydrogenase complexes (pyruvate-, alpha-ketoglutarate-, and branched-chain amino acid-dehydrogenase complex). The 2-oxoglutarate dehydrogenase complex is mainly active in the mitochondrion. A fraction of the 2-oxoglutarate dehydrogenase complex also localizes in the nucleus and is required for lysine succinylation of histones: associates with KAT2A on chromatin and provides succinyl-CoA to histone succinyltransferase KAT2A. In monomeric form may have additional moonlighting function as serine protease. Involved in the hyperactivation of spermatazoa during capacitation and in the spermatazoal acrosome reaction. This Mesocricetus auratus (Golden hamster) protein is Dihydrolipoyl dehydrogenase, mitochondrial (DLD).